The sequence spans 193 residues: dTTP/UTP pyrophosphatase (193 aa).

Asp-71 functions as the Proton acceptor in the catalytic mechanism.

Belongs to the Maf family. YhdE subfamily. Requires a divalent metal cation as cofactor.

It localises to the cytoplasm. The enzyme catalyses dTTP + H2O = dTMP + diphosphate + H(+). It carries out the reaction UTP + H2O = UMP + diphosphate + H(+). Nucleoside triphosphate pyrophosphatase that hydrolyzes dTTP and UTP. May have a dual role in cell division arrest and in preventing the incorporation of modified nucleotides into cellular nucleic acids. This Dictyoglomus thermophilum (strain ATCC 35947 / DSM 3960 / H-6-12) protein is dTTP/UTP pyrophosphatase.